Here is a 616-residue protein sequence, read N- to C-terminus: Chaperone protein HscA homolog (616 aa).

This sequence belongs to the heat shock protein 70 family.

Chaperone involved in the maturation of iron-sulfur cluster-containing proteins. Has a low intrinsic ATPase activity which is markedly stimulated by HscB. The sequence is that of Chaperone protein HscA homolog from Vibrio atlanticus (strain LGP32) (Vibrio splendidus (strain Mel32)).